We begin with the raw amino-acid sequence, 231 residues long: Large ribosomal subunit protein uL1 (231 aa).

It belongs to the universal ribosomal protein uL1 family. In terms of assembly, part of the 50S ribosomal subunit.

Functionally, binds directly to 23S rRNA. The L1 stalk is quite mobile in the ribosome, and is involved in E site tRNA release. Protein L1 is also a translational repressor protein, it controls the translation of the L11 operon by binding to its mRNA. The chain is Large ribosomal subunit protein uL1 from Staphylococcus epidermidis (strain ATCC 35984 / DSM 28319 / BCRC 17069 / CCUG 31568 / BM 3577 / RP62A).